Consider the following 187-residue polypeptide: NADH-quinone oxidoreductase subunit B (187 aa).

[4Fe-4S] cluster contacts are provided by Cys-46, Cys-47, Cys-112, and Cys-141.

The protein belongs to the complex I 20 kDa subunit family. In terms of assembly, NDH-1 is composed of 14 different subunits. Subunits NuoB, C, D, E, F, and G constitute the peripheral sector of the complex. [4Fe-4S] cluster serves as cofactor.

The protein resides in the cell inner membrane. The enzyme catalyses a quinone + NADH + 5 H(+)(in) = a quinol + NAD(+) + 4 H(+)(out). In terms of biological role, NDH-1 shuttles electrons from NADH, via FMN and iron-sulfur (Fe-S) centers, to quinones in the respiratory chain. The immediate electron acceptor for the enzyme in this species is believed to be ubiquinone. Couples the redox reaction to proton translocation (for every two electrons transferred, four hydrogen ions are translocated across the cytoplasmic membrane), and thus conserves the redox energy in a proton gradient. The sequence is that of NADH-quinone oxidoreductase subunit B from Myxococcus xanthus (strain DK1622).